Consider the following 689-residue polypeptide: Protein asunder (689 aa).

A coiled-coil region spans residues 521-550; it reads NGARLKLSKAKDQYRLLYRELEQLIQLNAT. Residues 578–619 form a disordered region; that stretch reads GASLLRSYTESPLSPERLEPITSGSASGSSNSNSLLKASKRR. Residues 600–614 show a composition bias toward low complexity; the sequence is SGSASGSSNSNSLLK. A Nuclear localization signal (NLS) motif is present at residues 613 to 619; the sequence is LKASKRR.

The protein belongs to the Integrator subunit 13 family. In terms of assembly, belongs to the multiprotein complex Integrator, at least composed of IntS1, IntS2, IntS3, IntS4, omd/IntS5, IntS6, defl/IntS7, IntS8, IntS9, IntS10, IntS11, IntS12, asun/IntS13, IntS14 and IntS15. The core complex associates with protein phosphatase 2A subunits mts/PP2A and Pp2A-29B, to form the Integrator-PP2A (INTAC) complex. Post-translationally, phosphorylated.

It localises to the nucleus. Its subcellular location is the cytoplasm. The protein resides in the perinuclear region. Component of the integrator complex, a multiprotein complex that terminates RNA polymerase II (Pol II) transcription in the promoter-proximal region of genes. The integrator complex provides a quality checkpoint during transcription elongation by driving premature transcription termination of transcripts that are unfavorably configured for transcriptional elongation: the complex terminates transcription by (1) catalyzing dephosphorylation of the C-terminal domain (CTD) of Pol II subunit Polr2A/Rbp1 and Spt5, and (2) degrading the exiting nascent RNA transcript via endonuclease activity. The integrator complex is also involved in the 3'-end processing of the U7 snRNA, and also the spliceosomal snRNAs U1, U2, U4 and U5. In Drosophila erecta (Fruit fly), this protein is Protein asunder (asun).